Consider the following 33-residue polypeptide: Alpha-amanitin proprotein 2 (33 aa).

A propeptide spanning residues 1 to 10 (MSDINATRLP) is cleaved from the precursor. At Ile11 the chain carries (3R,4R)-4,5-dihydroxyisoleucine; in form alpha-amanitin. A (3R,4S)-4-hydroxyisoleucine; in form gamma-amanitin modification is found at Ile11. The cyclopeptide (Ile-Pro) cross-link spans 11–18 (IWGIGCNP). A cross-link (2'-cysteinyl-6'-hydroxytryptophan sulfoxide (Trp-Cys)) is located at residues 12 to 16 (WGIGC). Pro18 bears the 4-hydroxyproline mark. Positions 19 to 33 (CVGDDVTSVLTRGEA) are excised as a propeptide.

The protein belongs to the MSDIN fungal toxin family. In terms of processing, processed by the macrocyclase-peptidase enzyme POPB to yield a toxic cyclic octapeptide. POPB first removes 10 residues from the N-terminus. Conformational trapping of the remaining peptide forces the enzyme to release this intermediate rather than proceed to macrocyclization. The enzyme rebinds the remaining peptide in a different conformation and catalyzes macrocyclization of the N-terminal 8 residues. In terms of tissue distribution, expressed in basidiocarps.

Major toxin belonging to the bicyclic octapeptides amatoxins that acts by binding non-competitively to RNA polymerase II and greatly slowing the elongation of transcripts from target promoters. This chain is Alpha-amanitin proprotein 2, found in Amanita exitialis (Guangzhou destroying angel).